The primary structure comprises 590 residues: Leukocyte immunoglobulin-like receptor subfamily B member 5 (590 aa).

The signal sequence occupies residues 1–23; it reads MTLTLSVLICLGLSVGPRTCVQA. Topologically, residues 24–458 are extracellular; that stretch reads GTLPKPTLWA…PQSGLGRHLG (435 aa). 4 consecutive Ig-like C2-type domains span residues 27–116, 111–228, 224–313, and 337–418; these read PKPT…LELV, DPLE…SLLI, PSLL…DPLD, and GENV…LVVS. Cys-49 and Cys-98 are joined by a disulfide. The N-linked (GlcNAc...) asparagine glycan is linked to Asn-139. 2 disulfides stabilise this stretch: Cys-144/Cys-195 and Cys-244/Cys-295. N-linked (GlcNAc...) asparagine glycosylation is found at Asn-279 and Asn-339. Cys-344 and Cys-395 are joined by a disulfide. Residues 416–433 are compositionally biased toward low complexity; the sequence is VVSGPSGDPSLSPTGSTP. The interval 416-449 is disordered; sequence VVSGPSGDPSLSPTGSTPTPGPEDQPLTPTGLDP. Residues 459–479 form a helical membrane-spanning segment; that stretch reads VVTGVSVAFVLLLFLLLFLLL. The Cytoplasmic segment spans residues 480 to 590; it reads RHRHQSKHRT…PSIYAPLAIH (111 aa). Disordered stretches follow at residues 488-514 and 529-550; these read RTSA…KRAS and KDTQ…EAPQ. Phosphoserine is present on Ser-514. The short motif at 552–557 is the ITIM motif 1 element; the sequence is VTYAQL. The span at 562-578 shows a compositional bias: basic and acidic residues; that stretch reads LRREATEPPPSQEREPP. Positions 562–590 are disordered; that stretch reads LRREATEPPPSQEREPPAEPSIYAPLAIH. The ITIM motif 2 signature appears at 582 to 587; sequence SIYAPL.

In terms of tissue distribution, detected in a natural killer (NK) cells.

The protein localises to the membrane. Functionally, may act as receptor for class I MHC antigens. This chain is Leukocyte immunoglobulin-like receptor subfamily B member 5 (LILRB5), found in Homo sapiens (Human).